The following is a 417-amino-acid chain: RH-like protein (417 aa).

The next 11 membrane-spanning stretches (helical) occupy residues 12 to 32, 44 to 64, 77 to 97, 125 to 145, 172 to 192, 203 to 223, 238 to 258, 265 to 285, 287 to 307, 331 to 351, and 358 to 378; these read CLPL…FFFT, LVAS…GLGF, VAFN…LDGF, ISMN…MELV, IHVF…KPLP, TSPS…WPTF, VFST…VSSL, INMT…GASC, VIHS…ISFG, TFGL…ALRV, and MIGF…AMSI.

It belongs to the ammonium transporter (TC 2.A.49) family. Rh subfamily.

The protein localises to the membrane. May be part of an oligomeric complex which is likely to have a transport or channel function in the erythrocyte membrane. The sequence is that of RH-like protein from Macaca fascicularis (Crab-eating macaque).